A 407-amino-acid chain; its full sequence is Elongation factor Tu (407 aa).

The 208-residue stretch at 10–217 (KPHVNVGTIG…TLDEYIPEPE (208 aa)) folds into the tr-type G domain. The segment at 19–26 (GHVDHGKT) is G1. 19-26 (GHVDHGKT) provides a ligand contact to GTP. Thr-26 serves as a coordination point for Mg(2+). The tract at residues 60–64 (GITIA) is G2. A G3 region spans residues 81–84 (DCPG). Residues 81 to 85 (DCPGH) and 136 to 139 (NKAD) each bind GTP. A G4 region spans residues 136 to 139 (NKAD). The tract at residues 184–186 (SAL) is G5.

Belongs to the TRAFAC class translation factor GTPase superfamily. Classic translation factor GTPase family. EF-Tu/EF-1A subfamily. In terms of assembly, monomer.

It is found in the cytoplasm. The catalysed reaction is GTP + H2O = GDP + phosphate + H(+). GTP hydrolase that promotes the GTP-dependent binding of aminoacyl-tRNA to the A-site of ribosomes during protein biosynthesis. This Teredinibacter turnerae (strain ATCC 39867 / T7901) protein is Elongation factor Tu.